The following is a 335-amino-acid chain: tRNA N6-adenosine threonylcarbamoyltransferase (335 aa).

A divalent metal cation is bound by residues His-109, His-113, and Tyr-130. Substrate-binding positions include 130 to 134, Asp-162, Gly-177, Glu-181, and Asn-266; that span reads YVSGG. Asp-294 serves as a coordination point for a divalent metal cation.

This sequence belongs to the KAE1 / TsaD family. In terms of assembly, component of the EKC/KEOPS complex composed of at least GON7, TP53RK, TPRKB, OSGEP and LAGE3; the whole complex dimerizes. A divalent metal cation is required as a cofactor.

The protein localises to the cytoplasm. The protein resides in the nucleus. It carries out the reaction L-threonylcarbamoyladenylate + adenosine(37) in tRNA = N(6)-L-threonylcarbamoyladenosine(37) in tRNA + AMP + H(+). Functionally, component of the EKC/KEOPS complex that is required for the formation of a threonylcarbamoyl group on adenosine at position 37 (t(6)A37) in tRNAs that read codons beginning with adenine. The complex is probably involved in the transfer of the threonylcarbamoyl moiety of threonylcarbamoyl-AMP (TC-AMP) to the N6 group of A37. OSGEP likely plays a direct catalytic role in this reaction, but requires other protein(s) of the complex to fulfill this activity. The chain is tRNA N6-adenosine threonylcarbamoyltransferase from Bos taurus (Bovine).